The primary structure comprises 343 residues: Selenide, water dikinase (343 aa).

The active site involves U16. Residue U16 is a non-standard amino acid, selenocysteine. ATP-binding positions include K19 and 46 to 48; that span reads GAE. D49 provides a ligand contact to Mg(2+). Residues D66, D89, and 137–139 contribute to the ATP site; that span reads GHT. A Mg(2+)-binding site is contributed by D89. D225 provides a ligand contact to Mg(2+).

This sequence belongs to the selenophosphate synthase 1 family. Class I subfamily. Homodimer. Mg(2+) serves as cofactor.

The enzyme catalyses hydrogenselenide + ATP + H2O = selenophosphate + AMP + phosphate + 2 H(+). In terms of biological role, synthesizes selenophosphate from selenide and ATP. This is Selenide, water dikinase from Geobacter sp. (strain M21).